A 136-amino-acid chain; its full sequence is Congerin-2 (136 aa).

Ser2 carries the post-translational modification N-acetylserine. Residues 4-136 form the Galectin domain; sequence RAEVRNIPFK…DARLTFVRLE (133 aa). 70 to 76 contacts a beta-D-galactoside; it reads WQQEERS.

As to quaternary structure, homodimer.

Its function is as follows. This protein binds beta-galactoside. Its physiological function is not yet known. The sequence is that of Congerin-2 from Conger myriaster (Conger eel).